The sequence spans 221 residues: Holliday junction branch migration complex subunit RuvA (221 aa).

A domain I region spans residues 1 to 61; the sequence is MQIYQFGKIV…DYTKITYGFA (61 aa). Residues 62 to 139 form a domain II region; it reads SFRERILFED…RFNENHKNQT (78 aa). A disordered region spans residues 133–155; the sequence is ENHKNQTEETNQDSQEKELEKKD. The segment at 140–166 is flexible linker; it reads EETNQDSQEKELEKKDDLADITIQKSN. Positions 146-155 are enriched in basic and acidic residues; the sequence is SQEKELEKKD. Residues 167-221 are domain III; the sequence is LEDKTAANLEDTLKMLGFKPRQIDYALTKVEPNENFENLIENAIKIISNAREFRN.

This sequence belongs to the RuvA family. In terms of assembly, homotetramer. Forms an RuvA(8)-RuvB(12)-Holliday junction (HJ) complex. HJ DNA is sandwiched between 2 RuvA tetramers; dsDNA enters through RuvA and exits via RuvB. An RuvB hexamer assembles on each DNA strand where it exits the tetramer. Each RuvB hexamer is contacted by two RuvA subunits (via domain III) on 2 adjacent RuvB subunits; this complex drives branch migration. In the full resolvosome a probable DNA-RuvA(4)-RuvB(12)-RuvC(2) complex forms which resolves the HJ.

It localises to the cytoplasm. Functionally, the RuvA-RuvB-RuvC complex processes Holliday junction (HJ) DNA during genetic recombination and DNA repair, while the RuvA-RuvB complex plays an important role in the rescue of blocked DNA replication forks via replication fork reversal (RFR). RuvA specifically binds to HJ cruciform DNA, conferring on it an open structure. The RuvB hexamer acts as an ATP-dependent pump, pulling dsDNA into and through the RuvAB complex. HJ branch migration allows RuvC to scan DNA until it finds its consensus sequence, where it cleaves and resolves the cruciform DNA. The sequence is that of Holliday junction branch migration complex subunit RuvA from Mesomycoplasma hyopneumoniae (strain J / ATCC 25934 / NCTC 10110) (Mycoplasma hyopneumoniae).